Here is a 448-residue protein sequence, read N- to C-terminus: Tubulin beta chain (448 aa).

Residues Gln11, Glu69, Ser138, Gly142, Thr143, Gly144, Asn204, and Asn226 each coordinate GTP. Glu69 is a Mg(2+) binding site. A disordered region spans residues 425-448 (YQDASISEGEEEYLEEEEPLEHEE). Acidic residues predominate over residues 432–448 (EGEEEYLEEEEPLEHEE).

Belongs to the tubulin family. In terms of assembly, dimer of alpha and beta chains. A typical microtubule is a hollow water-filled tube with an outer diameter of 25 nm and an inner diameter of 15 nM. Alpha-beta heterodimers associate head-to-tail to form protofilaments running lengthwise along the microtubule wall with the beta-tubulin subunit facing the microtubule plus end conferring a structural polarity. Microtubules usually have 13 protofilaments but different protofilament numbers can be found in some organisms and specialized cells. The cofactor is Mg(2+).

The protein localises to the cytoplasm. The protein resides in the cytoskeleton. Its function is as follows. Tubulin is the major constituent of microtubules, a cylinder consisting of laterally associated linear protofilaments composed of alpha- and beta-tubulin heterodimers. Microtubules grow by the addition of GTP-tubulin dimers to the microtubule end, where a stabilizing cap forms. Below the cap, tubulin dimers are in GDP-bound state, owing to GTPase activity of alpha-tubulin. The sequence is that of Tubulin beta chain (benA56) from Aspergillus oryzae (strain ATCC 42149 / RIB 40) (Yellow koji mold).